Consider the following 222-residue polypeptide: MITFSSLLVTFSAISTSLAIPGSILPKRSPMNFVLQRNESSLVRRATPNYEQDYTTGGDVIYTPSGSSFTVDWSTEDDFVVGLGWTTGSTNPINFSGTFGIGSGTALLSIYGWSENPLVEYYIVEDSASPPSFGTVKGSVTSDGSSYTIWENQRVNEPSIVGTATFNQYISVRSSPRKSGTVTVENHFQAWAALGMNLGTLNYQVLAVEGWGGEGAATQTVS.

Positions 1–19 are cleaved as a signal peptide; the sequence is MITFSSLLVTFSAISTSLA. The region spanning 36 to 222 is the GH11 domain; sequence QRNESSLVRR…GEGAATQTVS (187 aa). Asparagine 38 and asparagine 94 each carry an N-linked (GlcNAc...) asparagine glycan. Residue glutamate 120 is the Nucleophile of the active site. Catalysis depends on glutamate 209, which acts as the Proton donor.

The protein belongs to the glycosyl hydrolase 11 (cellulase G) family.

The enzyme catalyses Endohydrolysis of (1-&gt;4)-beta-D-xylosidic linkages in xylans.. The protein operates within glycan degradation; xylan degradation. In terms of biological role, endo-1,4-beta-xylanase involved in the hydrolysis of xylan, a major structural heterogeneous polysaccharide found in plant biomass representing the second most abundant polysaccharide in the biosphere, after cellulose. May act as an elicitor of plant defense responses in certain plants but does not exhibit any cell death when transiently expressed in N.benthamiana. In Botryotinia fuckeliana (strain B05.10) (Noble rot fungus), this protein is Ethylene-inducing xylanase 2.